A 317-amino-acid polypeptide reads, in one-letter code: MTKKVVTITLNPALDLTGSVNQLNVGSVSLVGQSSLHAAGKGVNVAKVLSELGAQVTVTGFLGRDNQELFCQLFEQLGVQDAFIRIAGATRINVKLVEQSGAVSDINFPGIQVTEADIEAFEATLQRLAQDHDYFVLAGSLPQGISPQRCAGWIAQLRSMNKKVLFDSSRDALLAGLDAKPWLIKPNDEELSQWCGRELTTLTDCQQAAAELAQKQIENIVISMGAEGVMWLHENQWLHAKPPKMQVVSTVGAGDTLVAGLCWGHMQRMEKESLLRFATALSALAVTQVGVGLGDREQLNTLQQQIQVSALYPTMGA.

ATP contacts are provided by residues 223 to 228 (SMGAEG) and 254 to 255 (GD). The active-site Proton acceptor is Asp-255.

It belongs to the carbohydrate kinase PfkB family.

The catalysed reaction is beta-D-fructose 1-phosphate + ATP = beta-D-fructose 1,6-bisphosphate + ADP + H(+). Functionally, catalyzes the ATP-dependent phosphorylation of fructose-l-phosphate to fructose-l,6-bisphosphate. This is 1-phosphofructokinase from Vibrio cholerae serotype O1 (strain ATCC 39315 / El Tor Inaba N16961).